The primary structure comprises 129 residues: Small ribosomal subunit protein uS11 (129 aa).

It belongs to the universal ribosomal protein uS11 family. As to quaternary structure, part of the 30S ribosomal subunit. Interacts with proteins S7 and S18. Binds to IF-3.

Its function is as follows. Located on the platform of the 30S subunit, it bridges several disparate RNA helices of the 16S rRNA. Forms part of the Shine-Dalgarno cleft in the 70S ribosome. This chain is Small ribosomal subunit protein uS11, found in Methylocella silvestris (strain DSM 15510 / CIP 108128 / LMG 27833 / NCIMB 13906 / BL2).